Consider the following 163-residue polypeptide: Putative pre-16S rRNA nuclease (163 aa).

This sequence belongs to the YqgF nuclease family.

The protein resides in the cytoplasm. Functionally, could be a nuclease involved in processing of the 5'-end of pre-16S rRNA. This Zymomonas mobilis subsp. mobilis (strain ATCC 31821 / ZM4 / CP4) protein is Putative pre-16S rRNA nuclease.